A 350-amino-acid polypeptide reads, in one-letter code: C-X-C chemokine receptor type 1 (350 aa).

Topologically, residues 1–39 are extracellular; that stretch reads MSNITDPQMWDFDDLNFTGMPPADEDYSPCMLETETLNK. Residues Asn3 and Asn16 are each glycosylated (N-linked (GlcNAc...) asparagine). Residues 40 to 66 form a helical membrane-spanning segment; that stretch reads YVVIIAYALVFLLSLLGNSLVMLVILY. Over 67-75 the chain is Cytoplasmic; sequence SRVGRSVTD. A helical membrane pass occupies residues 76 to 96; that stretch reads VYLLNLALADLLFALTLPIWA. Over 97 to 111 the chain is Extracellular; it reads ASKVNGWIFGTFLCK. Residues Cys110 and Cys187 are joined by a disulfide bond. Residues 112–133 form a helical membrane-spanning segment; sequence VVSLLKEVNFYSGILLLACISV. Residues 134–154 are Cytoplasmic-facing; the sequence is DRYLAIVHATRTLTQKRHLVK. Residues 155-174 form a helical membrane-spanning segment; sequence FVCLGCWGLSMNLSLPFFLF. Residues 175 to 199 are Extracellular-facing; sequence RQAYHPNNSSPVCYEVLGNDTAKWR. The chain crosses the membrane as a helical span at residues 200 to 220; it reads MVLRILPHTFGFIVPLFVMLF. Residues 221-242 are Cytoplasmic-facing; that stretch reads CYGFTLRTLFKAHMGQKHRAMR. Residues 243–264 form a helical membrane-spanning segment; it reads VIFAVVLIFLLCWLPYNLVLLA. Residues 265 to 285 are Extracellular-facing; that stretch reads DTLMRTQVIQESCERRNNIGR. The chain crosses the membrane as a helical span at residues 286–308; sequence ALDATEILGFLHSCLNPIIYAFI. Residues 309–350 are Cytoplasmic-facing; sequence GQNFRHGFLKILAMHGLVSKEFLARHRVTSYTSSSVNVSSNL.

Belongs to the G-protein coupled receptor 1 family. In terms of assembly, interacts with IL8. Interacts with GNAI2.

It is found in the cell membrane. Functionally, receptor to interleukin-8, which is a powerful neutrophils chemotactic factor. Binding of IL-8 to the receptor causes activation of neutrophils. This response is mediated via a G-protein that activates a phosphatidylinositol-calcium second messenger system. The protein is C-X-C chemokine receptor type 1 (CXCR1) of Homo sapiens (Human).